The following is a 312-amino-acid chain: Holliday junction branch migration complex subunit RuvB (312 aa).

The tract at residues 1–168 (MKTNYEFRPQ…FGHIFHLNEY (168 aa)) is large ATPase domain (RuvB-L). ATP-binding positions include arginine 8, glycine 49, lysine 52, threonine 53, threonine 54, 115-117 (EDF), arginine 158, tyrosine 168, and arginine 206. Position 53 (threonine 53) interacts with Mg(2+). The small ATPAse domain (RuvB-S) stretch occupies residues 169-234 (EPSEISAIIL…DIKNIFKKIQ (66 aa)). The interval 237 to 312 (EFGLDEQDIN…DFLKNNQLIK (76 aa)) is head domain (RuvB-H). DNA-binding residues include lysine 290 and arginine 295.

It belongs to the RuvB family. Homohexamer. Forms an RuvA(8)-RuvB(12)-Holliday junction (HJ) complex. HJ DNA is sandwiched between 2 RuvA tetramers; dsDNA enters through RuvA and exits via RuvB. An RuvB hexamer assembles on each DNA strand where it exits the tetramer. Each RuvB hexamer is contacted by two RuvA subunits (via domain III) on 2 adjacent RuvB subunits; this complex drives branch migration. In the full resolvosome a probable DNA-RuvA(4)-RuvB(12)-RuvC(2) complex forms which resolves the HJ.

Its subcellular location is the cytoplasm. It catalyses the reaction ATP + H2O = ADP + phosphate + H(+). Functionally, the RuvA-RuvB-RuvC complex processes Holliday junction (HJ) DNA during genetic recombination and DNA repair, while the RuvA-RuvB complex plays an important role in the rescue of blocked DNA replication forks via replication fork reversal (RFR). RuvA specifically binds to HJ cruciform DNA, conferring on it an open structure. The RuvB hexamer acts as an ATP-dependent pump, pulling dsDNA into and through the RuvAB complex. RuvB forms 2 homohexamers on either side of HJ DNA bound by 1 or 2 RuvA tetramers; 4 subunits per hexamer contact DNA at a time. Coordinated motions by a converter formed by DNA-disengaged RuvB subunits stimulates ATP hydrolysis and nucleotide exchange. Immobilization of the converter enables RuvB to convert the ATP-contained energy into a lever motion, pulling 2 nucleotides of DNA out of the RuvA tetramer per ATP hydrolyzed, thus driving DNA branch migration. The RuvB motors rotate together with the DNA substrate, which together with the progressing nucleotide cycle form the mechanistic basis for DNA recombination by continuous HJ branch migration. Branch migration allows RuvC to scan DNA until it finds its consensus sequence, where it cleaves and resolves cruciform DNA. This chain is Holliday junction branch migration complex subunit RuvB, found in Ureaplasma parvum serovar 3 (strain ATCC 27815 / 27 / NCTC 11736).